The sequence spans 356 residues: MLPPRTDPPPAQHSDDAVRLTDDDAASARLSAAQLGYLQDPFASLLYRPPMPQPGAFAPQAVGRARKPPLINVGTHHRTWGIDRLVDRFLQRGGKQVVSLGAGSDTRFWRLMSRATPPDLARYVEIDFPHLTSPKAQRIARHRKLYQYLGPSSTAMPPPGHPYTVSKGGTQLSSPLYTLLPLDLRPSPSEPASSISAILSHHVLPQLDPRLPTLFLAECLFPYMSPEDSREIIKWFGETFCSCMGVVYEMVGLDDSFGNVMKRNLAVRNLSIPGSIFSTPESQAGRFTSPMLQGGKFDSAGAKTLWQIREEDVGPEELQRISKLEILDEIEELRLVLEHYVIAWGTKGECMSSISL.

S-adenosyl-L-methionine is bound by residues Arg-78, Gly-101, Asp-127, Asp-183–Leu-184, and Glu-218.

This sequence belongs to the methyltransferase superfamily. LCMT family.

It carries out the reaction [phosphatase 2A protein]-C-terminal L-leucine + S-adenosyl-L-methionine = [phosphatase 2A protein]-C-terminal L-leucine methyl ester + S-adenosyl-L-homocysteine. Functionally, methylates the carboxyl group of the C-terminal leucine residue of protein phosphatase 2A catalytic subunits to form alpha-leucine ester residues. This chain is Leucine carboxyl methyltransferase 1 (PPM1), found in Cryptococcus neoformans var. neoformans serotype D (strain JEC21 / ATCC MYA-565) (Filobasidiella neoformans).